The sequence spans 92 residues: Small ribosomal subunit protein uS19 (92 aa).

Belongs to the universal ribosomal protein uS19 family.

Its function is as follows. Protein S19 forms a complex with S13 that binds strongly to the 16S ribosomal RNA. This is Small ribosomal subunit protein uS19 from Francisella philomiragia subsp. philomiragia (strain ATCC 25017 / CCUG 19701 / FSC 153 / O#319-036).